Here is a 280-residue protein sequence, read N- to C-terminus: Golgi phosphoprotein 3-like A (280 aa).

The tract at residues 1-32 (MTTLIRRGRRAEEGQERRADSEDSIKDKDEEE) is disordered. Positions 10-32 (RAEEGQERRADSEDSIKDKDEEE) are enriched in basic and acidic residues. Trp-62, Arg-71, Arg-152, and Arg-155 together coordinate a 1,2-diacyl-sn-glycero-3-phospho-(1D-myo-inositol 4-phosphate). The beta-hairpin required for oligomerization stretch occupies residues 171–182 (EKQNFLLFDMTT).

This sequence belongs to the GOLPH3/VPS74 family. Homooligomer.

Its subcellular location is the golgi apparatus. The protein localises to the golgi stack membrane. It is found in the trans-Golgi network membrane. Its function is as follows. Phosphatidylinositol-4-phosphate-binding protein that may play a role in the process of vesicle budding at the Golgi and anterograde transport to the plasma membrane. The sequence is that of Golgi phosphoprotein 3-like A (golph3l-a) from Xenopus laevis (African clawed frog).